The sequence spans 225 residues: Ribonuclease 3 (225 aa).

The RNase III domain maps to 5–127; that stretch reads IEKLTRQLGY…IIGAVYLDSD (123 aa). Glu40 serves as a coordination point for Mg(2+). Asp44 is a catalytic residue. The Mg(2+) site is built by Asp113 and Glu116. The active site involves Glu116. One can recognise a DRBM domain in the interval 154–224; sequence DPKTRLQEFL…AELALEQLTN (71 aa).

This sequence belongs to the ribonuclease III family. As to quaternary structure, homodimer. Requires Mg(2+) as cofactor.

It is found in the cytoplasm. It carries out the reaction Endonucleolytic cleavage to 5'-phosphomonoester.. Functionally, digests double-stranded RNA. Involved in the processing of primary rRNA transcript to yield the immediate precursors to the large and small rRNAs (23S and 16S). Processes some mRNAs, and tRNAs when they are encoded in the rRNA operon. Processes pre-crRNA and tracrRNA of type II CRISPR loci if present in the organism. The chain is Ribonuclease 3 from Vibrio vulnificus (strain CMCP6).